Consider the following 138-residue polypeptide: MSETPYYETMYILRPDIPEEEVDSHLKKYSAILEKSETEVLDSQMRGKRRLAYPIAKHKEGIYVQLSHKGNGQQVATLERAMRLSEDVIRYITVKQDGPLPTPKPTSKEDETEKEEVKPTEDKTESPAQEEKKEDSKE.

The tract at residues Val-94–Glu-138 is disordered. Residues Thr-106–Glu-138 are compositionally biased toward basic and acidic residues.

It belongs to the bacterial ribosomal protein bS6 family.

Functionally, binds together with bS18 to 16S ribosomal RNA. In Prochlorococcus marinus (strain NATL1A), this protein is Small ribosomal subunit protein bS6.